Here is a 383-residue protein sequence, read N- to C-terminus: uncharacterized protein (383 aa).

The interval 1 to 55 is disordered; that stretch reads MSSKLTVNAHYSPLKDEDPLDHIDSQTALDSMETDSTGKSSLYFSKSDDPLSKDI. Over residues 13-24 the composition is skewed to basic and acidic residues; sequence PLKDEDPLDHID. Positions 25-44 are enriched in polar residues; sequence SQTALDSMETDSTGKSSLYF. The segment covering 46 to 55 has biased composition (basic and acidic residues); sequence KSDDPLSKDI. Helical transmembrane passes span 87 to 107, 112 to 132, 157 to 177, 179 to 199, 205 to 225, 228 to 248, 262 to 282, 299 to 319, 329 to 349, and 352 to 372; these read LTIFFAVSSQIVFAILVTILN, NIINAPLLMLSFQMAFTSLMV, FIFVKILGIVSKTYCLAFVPV, FYQISRGLLLPFTILLSFVLL, LFPFGGCLLVMLGFGFGVRFE, VAPIGIILGVWSSFTTAIESV, LIYIFSALMSVFCLLLSVASL, FFIVLILSSLSNFYLNIATFT, YMISVSARSILQTLLAVAFLG, and LYGNRIYGVILILVGTLLYTL.

The protein belongs to the TPT transporter family.

The protein resides in the membrane. This is an uncharacterized protein from Schizosaccharomyces pombe (strain 972 / ATCC 24843) (Fission yeast).